An 86-amino-acid chain; its full sequence is Large ribosomal subunit protein bL27c (86 aa).

The interval 1-20 (MAHKKGSGSTRNGRDSNAQR) is disordered. Residues 7-19 (SGSTRNGRDSNAQ) show a composition bias toward polar residues.

This sequence belongs to the bacterial ribosomal protein bL27 family.

It is found in the plastid. It localises to the chloroplast. The polypeptide is Large ribosomal subunit protein bL27c (rpl27) (Guillardia theta (Cryptophyte)).